The sequence spans 439 residues: Xylose isomerase (439 aa).

Catalysis depends on residues His-101 and Asp-104. Mg(2+)-binding residues include Glu-232, Glu-268, His-271, Asp-296, Asp-307, Asp-309, and Asp-339.

Belongs to the xylose isomerase family. In terms of assembly, homotetramer. It depends on Mg(2+) as a cofactor.

It localises to the cytoplasm. The catalysed reaction is alpha-D-xylose = alpha-D-xylulofuranose. The chain is Xylose isomerase from Yersinia pestis bv. Antiqua (strain Angola).